The following is a 106-amino-acid chain: Nucleoid-associated protein XCV1128 (106 aa).

A disordered region spans residues 81–106 (IDAESKDRMGSATAGMQLPPGMKLPF).

Belongs to the YbaB/EbfC family. As to quaternary structure, homodimer.

The protein localises to the cytoplasm. Its subcellular location is the nucleoid. In terms of biological role, binds to DNA and alters its conformation. May be involved in regulation of gene expression, nucleoid organization and DNA protection. The polypeptide is Nucleoid-associated protein XCV1128 (Xanthomonas euvesicatoria pv. vesicatoria (strain 85-10) (Xanthomonas campestris pv. vesicatoria)).